We begin with the raw amino-acid sequence, 132 residues long: Small ribosomal subunit protein uS8 (132 aa).

This sequence belongs to the universal ribosomal protein uS8 family. As to quaternary structure, part of the 30S ribosomal subunit. Contacts proteins S5 and S12.

Functionally, one of the primary rRNA binding proteins, it binds directly to 16S rRNA central domain where it helps coordinate assembly of the platform of the 30S subunit. In Rickettsia massiliae (strain Mtu5), this protein is Small ribosomal subunit protein uS8.